The following is a 428-amino-acid chain: Putative zinc metalloprotease SACOL1281 (428 aa).

Residue H21 coordinates Zn(2+). E22 is an active-site residue. Position 25 (H25) interacts with Zn(2+). 4 consecutive transmembrane segments (helical) span residues 172 to 194 (FLTL…IGLA), 309 to 331 (GSTY…GFSF), 352 to 374 (IISL…LIPI), and 401 to 420 (TTII…LVTW). A PDZ domain is found at 186-269 (ALVLFIGLAY…TKSVELTPKK (84 aa)).

The protein belongs to the peptidase M50B family. Requires Zn(2+) as cofactor.

The protein resides in the cell membrane. In Staphylococcus aureus (strain COL), this protein is Putative zinc metalloprotease SACOL1281.